The sequence spans 56 residues: Alpha-conotoxin TxIA (56 aa).

Positions 1-16 (MFTVFLLVVLATAVVS) are cleaved as a signal peptide. Residues 17–39 (FTSDRASDDGKAAASDLITLTIK) constitute a propeptide that is removed on maturation. Intrachain disulfides connect C41-C47 and C42-C55. The tract at residues 43 to 45 (SRP) is ser-Xaa-Pro motif, crucial for potent interaction with nAChR. 4-hydroxyproline; partial is present on residues P45 and P46. A Cysteine amide modification is found at C55.

Belongs to the conotoxin A superfamily. Exists in 4 different forms, depending on hydroxylations. Tx1a-PP does not contain hydroxyproline, tx1a-OP has one hydroxyproline at position 45, tx1a-PO has one hydroxyproline at position 46, and tx1a-PP has two hydroxyprolines at positions 45 and 46. As to expression, expressed by the venom duct. Tx1a that containing 1 or 2 non-hydroxylated prolines are mostly present in part 5 of the venom duct (distal part near the pharynx), whereas tx1a-OO (with 2 hydroxyprolines) is mostly present in part 4 of the venom duct (follewed by part 3).

It is found in the secreted. Its function is as follows. Alpha-conotoxins act on postsynaptic membranes, they bind to the nicotinic acetylcholine receptors (nAChR) and thus inhibit them. This toxin inhibits rat alpha-3-beta-2/CHRNA3-CHRNB2 (IC(50)=3.5 nM), rat alpha-7/CHRNA7 (IC(50)=392 nM) nAChR, and the L.stagnalis soluble acetylcholine receptor (all tested without hydroxyproline). This chain is Alpha-conotoxin TxIA, found in Conus textile (Cloth-of-gold cone).